Consider the following 256-residue polypeptide: Thiazole synthase (256 aa).

Lysine 96 acts as the Schiff-base intermediate with DXP in catalysis. 1-deoxy-D-xylulose 5-phosphate-binding positions include glycine 157, 184–185 (AG), and 206–207 (NT).

Belongs to the ThiG family. In terms of assembly, homotetramer. Forms heterodimers with either ThiH or ThiS.

The protein localises to the cytoplasm. The enzyme catalyses [ThiS sulfur-carrier protein]-C-terminal-Gly-aminoethanethioate + 2-iminoacetate + 1-deoxy-D-xylulose 5-phosphate = [ThiS sulfur-carrier protein]-C-terminal Gly-Gly + 2-[(2R,5Z)-2-carboxy-4-methylthiazol-5(2H)-ylidene]ethyl phosphate + 2 H2O + H(+). It functions in the pathway cofactor biosynthesis; thiamine diphosphate biosynthesis. Its function is as follows. Catalyzes the rearrangement of 1-deoxy-D-xylulose 5-phosphate (DXP) to produce the thiazole phosphate moiety of thiamine. Sulfur is provided by the thiocarboxylate moiety of the carrier protein ThiS. In vitro, sulfur can be provided by H(2)S. The sequence is that of Thiazole synthase from Roseobacter denitrificans (strain ATCC 33942 / OCh 114) (Erythrobacter sp. (strain OCh 114)).